The primary structure comprises 1377 residues: DNA-directed RNA polymerase subunit beta' (1377 aa).

The Zn(2+) site is built by Cys-60, Cys-62, Cys-75, and Cys-78. Residues Asp-449, Asp-451, and Asp-453 each contribute to the Mg(2+) site. Zn(2+) is bound by residues Cys-777, Cys-851, Cys-858, and Cys-861.

Belongs to the RNA polymerase beta' chain family. As to quaternary structure, the RNAP catalytic core consists of 2 alpha, 1 beta, 1 beta' and 1 omega subunit. When a sigma factor is associated with the core the holoenzyme is formed, which can initiate transcription. Mg(2+) is required as a cofactor. The cofactor is Zn(2+).

It carries out the reaction RNA(n) + a ribonucleoside 5'-triphosphate = RNA(n+1) + diphosphate. Its function is as follows. DNA-dependent RNA polymerase catalyzes the transcription of DNA into RNA using the four ribonucleoside triphosphates as substrates. The sequence is that of DNA-directed RNA polymerase subunit beta' from Borrelia hermsii (strain HS1 / DAH).